The chain runs to 1898 residues: 1-phosphatidylinositol 4,5-bisphosphate phosphodiesterase epsilon-1 (1898 aa).

In terms of domain architecture, Ras-GEF spans 66-328; that stretch reads FPEEVAFQLS…EREQKEKEAK (263 aa). 2 disordered regions span residues 419-444 and 569-722; these read QPLDSGRGAPSPMPSGRTPGTGGVGV and TNTN…GPSG. Residues 569-583 show a composition bias toward polar residues; that stretch reads TNTNATRPNDSSLSS. The segment covering 590 to 605 has biased composition (basic residues); sequence SRLKNLKNAMQKKLRG. 3 stretches are compositionally biased toward low complexity: residues 625–637, 666–687, and 701–716; these read PPSIKSQISSQSG, YTPRSRTPTSSSYGGRSVGGRS, and SGSISSSGQMSIQVSG. The region spanning 910–1058 is the PI-PLC X-box domain; that stretch reads EDLRYPLSHY…MKNKILIKNK (149 aa). Active-site residues include histidine 925 and histidine 970. Disordered regions lie at residues 1082–1178 and 1238–1274; these read QLNL…DRKT and EEGPASASLSFSSRARTPSNLLNTPAPPRRQRSSTQL. Residues 1098-1123 are compositionally biased toward acidic residues; sequence TVDEVEDDDLDEFLDDEENEEDDQEE. Residues 1124–1144 show a composition bias toward basic and acidic residues; sequence VQVRSEKEDSPKTSKRAEKSA. The segment covering 1146-1155 has biased composition (polar residues); sequence NIKQQDSLCS. Composition is skewed to low complexity over residues 1163–1172 and 1242–1253; these read KPSTSKTTSK and ASASLSFSSRAR. In terms of domain architecture, PI-PLC Y-box spans 1279-1385; the sequence is AAEFLGSVRA…CGYQLKPRCL (107 aa). The C2 domain maps to 1391 to 1517; sequence LLYNKFLPLS…PLRTPTNLPI (127 aa). Positions 1570-1665 constitute a Ras-associating 1 domain; it reads QIFVLRITGA…RRFVLRKKGS (96 aa). A compositionally biased stretch (low complexity) spans 1680-1694; the sequence is GTSGSSTSVSPSPLT. The segment at 1680 to 1711 is disordered; that stretch reads GTSGSSTSVSPSPLTKDGHVKSASSNQLHGRS. Positions 1738 to 1857 constitute a Ras-associating 2 domain; that stretch reads DTFLVCVHNV…GRFVLENRKD (120 aa).

As to quaternary structure, interacts (via Ras-associating domain 1) with let-60 (in GTP-bound form). Requires Ca(2+) as cofactor. As to expression, expressed in the spermatheca, vulva, intestine and excretory cells. Expressed in sensory neurons AWC, AFD, ASE, ASG and BAG, interneurons, ventral nerve cord neurons and tail neurons. Expressed in body muscles.

The catalysed reaction is a 1,2-diacyl-sn-glycero-3-phospho-(1D-myo-inositol-4,5-bisphosphate) + H2O = 1D-myo-inositol 1,4,5-trisphosphate + a 1,2-diacyl-sn-glycerol + H(+). Functionally, the production of the second messenger molecules diacylglycerol (DAG) and inositol 1,4,5-trisphosphate (IP3) is mediated by activated phosphatidylinositol-specific phospholipase C enzymes. plc-1 is a bifunctional enzyme which also regulates small GTPases of the Ras superfamily through its Ras guanine-exchange factor (RasGEF) activity. By activating IP3 receptor itr-1-mediated intracellular Ca(2+) release via the production of IP3, regulates ovulation by controlling contraction and/or dilation of the distal spermatheca valve during oocyte entry and the timing of the dilation of the spermatheca-uterine valve during oocyte exit. In a similar manner, plays an essential role in epidermal morphogenesis by regulating migration of epidermal cells during ventral closure and to a lesser extent by regulating epidermal cell dorsal intercalation. Involved in the immune response to S.aureus bacterium by activating kinase dkf-1 via the production of DAG which in turn activates transcription factor hlh-30. In ASER neurons, required for adjusting the orientation behavior in salt gradients based on the memory of previous salt concentration encountered. In Caenorhabditis elegans, this protein is 1-phosphatidylinositol 4,5-bisphosphate phosphodiesterase epsilon-1.